A 791-amino-acid chain; its full sequence is AP-1 complex subunit gamma-like 2 (791 aa).

A GAE domain is found at 671–786 (APIPSVRVFE…QEIFEVDNLP (116 aa)).

This sequence belongs to the adaptor complexes large subunit family. May interact with AP1S1/Sigma1A-adaptin and AP1S2/Sigma1B-adaptin. Probably does not interact with APB1. Interacts (via GAE domain) with RABEP1, NECAP1, CLINT1 and AFTPH/aftiphilin. Interacts with HBV major surface antigen L. Interacts with HBV core protein C in a ubiquitin-dependent manner. Binds ubiquitin. As to expression, widely expressed.

Its subcellular location is the golgi apparatus membrane. It is found in the cytoplasmic vesicle membrane. The protein localises to the endosome membrane. Functionally, may function in protein sorting in late endosomes or multivesucular bodies (MVBs). Involved in MVB-assisted maturation of hepatitis B virus (HBV). This is AP-1 complex subunit gamma-like 2 (Ap1g2) from Mus musculus (Mouse).